We begin with the raw amino-acid sequence, 388 residues long: MAGCCSVLGSFLFEYDTPRIVLIRSRKVGLMNRVVQLLILAYVIGWVFVWEKGYQETDSVVSSVTTKAKGVAVTNTSQLGFRIWDVADYVVPAQEENSLFIMTNMIVTVNQTQGTCPEIPDKTSICDSDANCTLGSSDTHSSGIGTGRCVPFNASVKTCEVAAWCPVENDAGVPTPAFLKAAENFTLLVKNNIWYPKFNFSKRNILPNITTSYLKSCIYNARTDPFCPIFRLGQIVADAGHSFQEMAVEGGIMGIQIKWDCNLDRAASHCLPRYSFRRLDTRDLEHNVSPGYNFRFAKYYRDLAGNEQRTLTKAYGIRFDIIVFGKAGKFDIIPTMINVGSGLALLGVATVLCDVIVLYCMKKRYYYRDKKYKYVEDYEQGLSGEMNQ.

Residues 1–33 are Cytoplasmic-facing; sequence MAGCCSVLGSFLFEYDTPRIVLIRSRKVGLMNR. Residues 34–54 form a helical membrane-spanning segment; it reads VVQLLILAYVIGWVFVWEKGY. The Extracellular segment spans residues 55 to 338; that stretch reads QETDSVVSSV…KFDIIPTMIN (284 aa). The ATP site is built by Lys-67 and Lys-69. CTP-binding residues include Lys-67 and Lys-69. Residues Asn-75, Asn-110, Asn-131, Asn-153, and Asn-184 are each glycosylated (N-linked (GlcNAc...) asparagine). 3 disulfides stabilise this stretch: Cys-116-Cys-165, Cys-126-Cys-149, and Cys-132-Cys-159. 2 residues coordinate ATP: Thr-186 and Leu-188. Residue Thr-186 coordinates CTP. Asn-199 and Asn-208 each carry an N-linked (GlcNAc...) asparagine glycan. 2 disulfides stabilise this stretch: Cys-217/Cys-227 and Cys-261/Cys-270. The ATP site is built by Asn-293, Arg-295, and Lys-313. Asn-293, Arg-295, and Lys-313 together coordinate CTP. A helical membrane pass occupies residues 339–359; that stretch reads VGSGLALLGVATVLCDVIVLY. Over 360 to 388 the chain is Cytoplasmic; that stretch reads CMKKRYYYRDKKYKYVEDYEQGLSGEMNQ.

The protein belongs to the P2X receptor family. Functional P2RXs are organized as homomeric and heteromeric trimers. Functional P2XRs are organized as homomeric and heteromeric trimers. Forms heterotrimer with P2RX1. Interacts with P2RX7 (via C-terminus); this interaction is functional only in the presence of ATP. Forms heterotrimer with P2RX4; functional differences between homomeric P2RX4 and P2RX4/6 heterotrimer are minor. Interacts with AP1M2.

Its subcellular location is the cell membrane. It localises to the lysosome membrane. It catalyses the reaction K(+)(in) = K(+)(out). The enzyme catalyses Na(+)(in) = Na(+)(out). The catalysed reaction is Ca(2+)(in) = Ca(2+)(out). Its activity is regulated as follows. Activated by ATP. pH-dependent and inhibited by acidic pH. Its function is as follows. ATP-gated nonselective transmembrane cation channel permeable to potassium, sodium and calcium. CTP, but not GTP or UTP, functions as a weak affinity agonist for P2RX4. Activated by extracellularly released ATP, it plays multiple role in immunity and central nervous system physiology. Plays a key role in initial steps of T-cell activation and Ca(2+) microdomain formation. Also participates in basal T-cell activity without TCR/CD3 stimulation. Promotes the differentiation and activation of Th17 cells via expression of retinoic acid-related orphan receptor C/RORC. Upon activation, drives microglia motility via the PI3K/Akt pathway. Could also function as an ATP-gated cation channel of lysosomal membranes. The protein is P2X purinoceptor 4 (P2rx4) of Mus musculus (Mouse).